The sequence spans 296 residues: 5'-3' exonuclease (296 aa).

Residues 175–262 (VMPKALIDIK…VPLACTLKDA (88 aa)) enclose the 5'-3' exonuclease domain.

In terms of biological role, 5'-3' exonuclease acting preferentially on double-stranded DNA. This is 5'-3' exonuclease (ypcP) from Bacillus subtilis (strain 168).